The sequence spans 131 residues: MSWQTYVDDHLMCDVDGQHLTASAIVGHDGSIWAQSAGFPQFKPEEITGIMNDFAEPGSLAPTGLYLAGMKYMVIQGEPGAVIRGKKGSGGVTIKKTGQALIFGIYEEPMTPGQCNMVVERMGDYLVDQGL.

This sequence belongs to the profilin family. As to quaternary structure, occurs in many kinds of cells as a complex with monomeric actin in a 1:1 ratio.

It localises to the cytoplasm. Its subcellular location is the cytoskeleton. Functionally, binds to actin and affects the structure of the cytoskeleton. At high concentrations, profilin prevents the polymerization of actin, whereas it enhances it at low concentrations. By binding to PIP2, it inhibits the formation of IP3 and DG. The protein is Profilin-1 of Lilium longiflorum (Trumpet lily).